The primary structure comprises 190 residues: Anthranilate synthase component II (190 aa).

One can recognise a Glutamine amidotransferase type-1 domain in the interval 1 to 190 (MILIIDNYDS…ENFCTGIAKA (190 aa)). Residue 51–53 (GPG) participates in L-glutamine binding. Cysteine 76 serves as the catalytic Nucleophile; for GATase activity. L-glutamine is bound by residues glutamine 80 and 126 to 127 (SL). Catalysis depends on residues histidine 167 and glutamate 169.

In terms of assembly, tetramer of two components I and two components II.

The catalysed reaction is chorismate + L-glutamine = anthranilate + pyruvate + L-glutamate + H(+). It participates in amino-acid biosynthesis; L-tryptophan biosynthesis; L-tryptophan from chorismate: step 1/5. The protein is Anthranilate synthase component II (trpG2) of Haloarcula marismortui (strain ATCC 43049 / DSM 3752 / JCM 8966 / VKM B-1809) (Halobacterium marismortui).